The chain runs to 351 residues: Transcriptional activator POG1 (351 aa).

Over residues 1-27 (MKQEPHRQSEEKEKPKGPMAVEREHHT) the composition is skewed to basic and acidic residues. The interval 1–56 (MKQEPHRQSEEKEKPKGPMAVEREHHTSLSSGTTMTASTGDESTNSRPVESSQTEK) is disordered. Residues 28–56 (SLSSGTTMTASTGDESTNSRPVESSQTEK) show a composition bias toward polar residues. Phosphoserine is present on residues Ser152 and Ser168. Disordered regions lie at residues 237–256 (GPQA…TPVM) and 280–351 (SMGP…PPPT). Composition is skewed to polar residues over residues 241-256 (QLPT…TPVM) and 287-296 (IYGQQHQPQP). The residue at position 314 (Ser314) is a Phosphoserine.

This sequence belongs to the POG1 family. Post-translationally, phosphorylated by CDC28.

It is found in the nucleus. Its function is as follows. Transcriptional activator which promotes cell cycle recovery with CLN2, after pheromone induced G1 arrest, probably inhibiting the ability of STE20 to activate the pheromone response pathway. Binds the promoters of genes that function in cell cycle regulation, cytoskeletal organization, and spindle assembly. May also be involved in stress-resistance. In Saccharomyces cerevisiae (strain YJM789) (Baker's yeast), this protein is Transcriptional activator POG1 (POG1).